The following is a 217-amino-acid chain: Trimethylamine corrinoid protein 2 (217 aa).

One can recognise a B12-binding N-terminal domain in the interval 1-92 (MAGKEEIIAK…EMEKRKAKTT (92 aa)). Positions 94-217 (LGTVIIGTIE…VNKIKAAIKS (124 aa)) constitute a B12-binding domain. His107 provides a ligand contact to methylcob(III)alamin.

Belongs to the methylamine corrinoid protein family. As to quaternary structure, can form a complex with MttB.

The protein operates within one-carbon metabolism; methanogenesis from trimethylamine. Its function is as follows. Acts probably as a methyl group carrier between MttB and either MtbA or MtaA. The protein is Trimethylamine corrinoid protein 2 (mttC2) of Methanosarcina acetivorans (strain ATCC 35395 / DSM 2834 / JCM 12185 / C2A).